A 995-amino-acid polypeptide reads, in one-letter code: Putative pentatricopeptide repeat-containing protein At5g09950 (995 aa).

PPR repeat units follow at residues 35–65, 66–100, 101–137, 138–169, 170–204, 205–241, 242–276, 278–303, 307–342, 348–378, 379–413, 414–448, 449–483, 484–515, 516–550, 551–581, 583–617, 618–652, 653–683, 684–718, 720–750, and 756–786; these read DVYL…MPLR, NCVS…GIFS, NQYA…SYAV, DAVV…IEVK, NSVS…GSRP, TEYT…GLLT, DLFV…NAVT, NGLM…MNSM, SPES…VITT, MVGI…MTDK, DSVS…DILP, GSFT…GIDL, NVSV…DQVS, WNSI…GQKL, NRIT…NIAD, EATT…MAER, DNVT…GQRL, DSFM…CLES, DVVV…MPVR, NSYS…GQTP, DHVT…MSDS, and RIEH…MPMK. Positions 791 to 868 are type E motif; that stretch reads IWRTVLGACC…EAGYSWVTMK (78 aa). The type E(+) motif stretch occupies residues 869–899; it reads DGVHMFVAGDKSHPDADVIYKKLKELNRKMR. The type DYW motif stretch occupies residues 900-995; the sequence is DAGYVPQTGF…DGACSCSDFW (96 aa).

It belongs to the PPR family. PCMP-H subfamily.

The polypeptide is Putative pentatricopeptide repeat-containing protein At5g09950 (PCMP-H35) (Arabidopsis thaliana (Mouse-ear cress)).